The sequence spans 211 residues: High frequency lysogenization protein HflD homolog (211 aa).

The protein belongs to the HflD family.

Its subcellular location is the cytoplasm. The protein resides in the cell membrane. This is High frequency lysogenization protein HflD homolog from Buchnera aphidicola subsp. Acyrthosiphon pisum (strain 5A).